A 2322-amino-acid polypeptide reads, in one-letter code: Protein sidekick homolog (2322 aa).

An N-terminal signal peptide occupies residues 1 to 26 (MNYRIFLLFCTTTVLWSVVSTQLVLG). Residues 27–2020 (KPPIFQNTGP…IPDDPFYTTW (1994 aa)) lie on the Extracellular side of the membrane. Ig-like C2-type domains lie at 28–105 (PPIF…AAIS), 217–319 (PSLQ…AYLT), and 324–397 (PVLK…ADMS). 3 disulfides stabilise this stretch: Cys52/Cys94, Cys247/Cys301, and Cys345/Cys386. Residue Asn408 is glycosylated (N-linked (GlcNAc...) asparagine). 2 Ig-like C2-type domains span residues 450–545 (PFTS…VQVN) and 548–639 (SLIE…AMLQ). 2 cysteine pairs are disulfide-bonded: Cys481/Cys529 and Cys569/Cys623. N-linked (GlcNAc...) asparagine glycans are attached at residues Asn633 and Asn656. 13 Fibronectin type-III domains span residues 646 to 752 (MPER…MPQQ), 757 to 854 (APRN…TAEG), 859 to 958 (APKN…TEED), 962 to 1056 (AVDE…VPPE), 1060 to 1155 (RPSM…TLQT), 1160 to 1255 (PSQR…TYES), 1260 to 1360 (SPRN…TLED), 1364 to 1458 (PPES…SSVR), 1464 to 1567 (APAP…TLPS), 1572 to 1672 (QPIS…VGYS), 1674 to 1774 (PKRN…LEDK), 1777 to 1873 (PVGV…SKDG), and 1908 to 2010 (QAKR…VPES). Positions 732–762 (SNKHGPGKPSLPSSSVTMPQQPPSAAPRNVA) are disordered. Asn808, Asn869, Asn933, and Asn1017 each carry an N-linked (GlcNAc...) asparagine glycan. Basic and acidic residues predominate over residues 1040 to 1049 (GDGPVEETKF). Positions 1040-1060 (GDGPVEETKFESGVPPELPGR) are disordered. Asn1108 carries N-linked (GlcNAc...) asparagine glycosylation. The segment at 1139–1163 (GRGAPSEPSRTFETLQTNPETPSQR) is disordered. Positions 1146–1163 (PSRTFETLQTNPETPSQR) are enriched in polar residues. Asn1615, Asn1677, and Asn1864 each carry an N-linked (GlcNAc...) asparagine glycan. The segment at 1916 to 1965 (EETENGYVSQRPRRNEIRGAKSAAQTSASSNSNRPTHPIGEWITLRPTDG) is disordered. The span at 1935 to 1947 (AKSAAQTSASSNS) shows a compositional bias: low complexity. Residues 2021 to 2041 (WFMALVAMAAFVLIVIIIAIL) form a helical membrane-spanning segment. At 2042-2322 (CVTGSSAKYR…NLTAGFSSFV (281 aa)) the chain is on the cytoplasmic side. 3 disordered regions span residues 2081-2114 (NMTRSRELPTRPGTTQSWLSDQSREPPAYGSVLG), 2167-2254 (YVVS…ADDI), and 2276-2322 (MVRA…SSFV). A compositionally biased stretch (polar residues) spans 2092-2101 (PGTTQSWLSD). A compositionally biased stretch (low complexity) spans 2207-2223 (PSSSGGSQPQGSPQQQQ). Over residues 2227 to 2238 (DSFDEEDDVDDD) the composition is skewed to acidic residues. Composition is skewed to polar residues over residues 2282–2302 (LTNQQPSSAAGRSSTTDSTSE) and 2310–2322 (ATPNLTAGFSSFV).

This sequence belongs to the sidekick family.

The protein localises to the membrane. Cell adhesion protein. This is Protein sidekick homolog (rig-4) from Caenorhabditis briggsae.